The primary structure comprises 242 residues: uncharacterized protein (242 aa).

Positions 1-11 are enriched in low complexity; the sequence is MNFEAASAPSQ. The disordered stretch occupies residues 1–45; that stretch reads MNFEAASAPSQQPSPTPAPKTEEPKENGGSEQQADQPENSKKDDV.

It to U.parvum UU171.

This is an uncharacterized protein from Ureaplasma parvum serovar 3 (strain ATCC 700970).